The sequence spans 328 residues: MYNSACPEGRSVISRRRTGLGDCLWSLAAAWSYARHTRRSLVVDWSESCYSADPNINLFPVLFDNINDIGGVSVHYVSRTSSLALESSVIPAWWRLPVKQRGTRSDAQIFRERDELRNLFFSRRDADAAAVICDCCLMWCCDEDLEREFYDHLIVNQYVRQEVDRVYAERFLGNVVIGVHIRHGNGEDILDHDRYWCEENAAMNLVAHKIREERRKFPFRSTKIFLCTDSPAVSEWFRREMPGLFATEKEFRQRGEGELHSAHFGLGGAVAALVDMQLLSRCDVLIRYPPTSAFSRWPSLLVERVFDFDLARGVFCQADRKAGGASSG.

One can recognise a GT23 domain in the interval 6–317; that stretch reads CPEGRSVISR…FDLARGVFCQ (312 aa).

The protein belongs to the glycosyltransferase 23 family.

Its function is as follows. Fucosyltransferase which adds the fucose moiety of the nod factor on its terminal reducing N-acetylglucosamine end. Uses GDP-fucose as the donor group. This is Nodulation protein Z (nodZ) from Azorhizobium caulinodans (strain ATCC 43989 / DSM 5975 / JCM 20966 / LMG 6465 / NBRC 14845 / NCIMB 13405 / ORS 571).